The chain runs to 184 residues: Cytochrome c homolog (184 aa).

The Cytoplasmic portion of the chain corresponds to Met-1–Leu-10. The chain crosses the membrane as a helical; Signal-anchor span at residues Gly-11–Phe-31. Over Ser-32–Lys-184 the chain is Periplasmic. Residues Cys-84, Cys-87, His-88, and Met-151 each coordinate heme c.

This sequence belongs to the cytochrome c family. In terms of processing, binds 1 heme c group covalently per subunit.

The protein localises to the cell membrane. In terms of biological role, may be involved in electron transfer from bc1 complex to aa3. The sequence is that of Cytochrome c homolog (cycM) from Bradyrhizobium diazoefficiens (strain JCM 10833 / BCRC 13528 / IAM 13628 / NBRC 14792 / USDA 110).